The primary structure comprises 456 residues: Protein ESC2 (456 aa).

Positions 1-24 (MTGDSRSISEPSINLDPDNTSFSD) are enriched in polar residues. Positions 1 to 154 (MTGDSRSISE…SSIRSISPAG (154 aa)) are disordered. Residues 25-43 (ENSDDFFMDNSYDIDEIDH) show a composition bias toward acidic residues. Residues 83–93 (QSLSRSSSKNV) are compositionally biased toward polar residues. 3 positions are modified to phosphoserine: Ser-90, Ser-125, and Ser-126. The SUMO-like region 1 repeat unit spans residues 169-287 (ENDDFFKELA…QDFENEVSDI (119 aa)). Residues 301-360 (EATLESKLKEEEAALLIKERQEMERKLEKKRNEQEESEYREFESELKNVEETQEIKENDT) adopt a coiled-coil conformation. The SUMO-like region 2 repeat unit spans residues 380 to 456 (MEEVMRIALM…DEDMVDVIID (77 aa)).

In terms of assembly, component of a cullin-RING ligase (CRL)-like complex composed of at least the cullin RTT101, a linker protein MMS1, and the potential substrate receptor ESC2. Interacts with RTT101 and MMS1. Interacts with SIR2.

The protein resides in the cytoplasm. It is found in the nucleus. Its function is as follows. May be a substrate targeting component of a cullin-RING-based E3 ubiquitin-protein ligase complex RTT101(MMS1-ESC2). Involved in HMR and telomere silencing via the recruitment or stabilizing of the SIR (silent information regulators) complex. The chain is Protein ESC2 (ESC2) from Saccharomyces cerevisiae (strain ATCC 204508 / S288c) (Baker's yeast).